The chain runs to 478 residues: Protein nucleotidyltransferase YdiU (478 aa).

Positions 74, 76, 77, 97, 109, 110, 160, and 167 each coordinate ATP. Residue D236 is the Proton acceptor of the active site. Residues N237 and D246 each coordinate Mg(2+). Residue D246 participates in ATP binding.

It belongs to the SELO family. Mg(2+) serves as cofactor. Requires Mn(2+) as cofactor.

It catalyses the reaction L-seryl-[protein] + ATP = 3-O-(5'-adenylyl)-L-seryl-[protein] + diphosphate. The enzyme catalyses L-threonyl-[protein] + ATP = 3-O-(5'-adenylyl)-L-threonyl-[protein] + diphosphate. It carries out the reaction L-tyrosyl-[protein] + ATP = O-(5'-adenylyl)-L-tyrosyl-[protein] + diphosphate. The catalysed reaction is L-histidyl-[protein] + UTP = N(tele)-(5'-uridylyl)-L-histidyl-[protein] + diphosphate. It catalyses the reaction L-seryl-[protein] + UTP = O-(5'-uridylyl)-L-seryl-[protein] + diphosphate. The enzyme catalyses L-tyrosyl-[protein] + UTP = O-(5'-uridylyl)-L-tyrosyl-[protein] + diphosphate. Nucleotidyltransferase involved in the post-translational modification of proteins. It can catalyze the addition of adenosine monophosphate (AMP) or uridine monophosphate (UMP) to a protein, resulting in modifications known as AMPylation and UMPylation. The sequence is that of Protein nucleotidyltransferase YdiU from Chromobacterium violaceum (strain ATCC 12472 / DSM 30191 / JCM 1249 / CCUG 213 / NBRC 12614 / NCIMB 9131 / NCTC 9757 / MK).